An 82-amino-acid polypeptide reads, in one-letter code: Large ribosomal subunit protein uL29 (82 aa).

The protein belongs to the universal ribosomal protein uL29 family.

This Trichodesmium erythraeum (strain IMS101) protein is Large ribosomal subunit protein uL29.